Here is a 341-residue protein sequence, read N- to C-terminus: Spore photoproduct lyase (341 aa).

The Radical SAM core domain maps to 76–304; sequence SKPSAEYAIP…ESKRKYKWGR (229 aa). [4Fe-4S] cluster-binding residues include cysteine 90, cysteine 94, and cysteine 97. The H-T-H motif DNA-binding region spans 217–234; it reads QAARKVAGAGYKLGFVVA.

It belongs to the radical SAM superfamily. SPL family. Monomer or homodimer. [4Fe-4S] cluster serves as cofactor. S-adenosyl-L-methionine is required as a cofactor.

The enzyme catalyses (5R)-5,6-dihydro-5-(thymidin-7-yl)thymidine in DNA = a thymidine dimer in DNA. Its function is as follows. Involved in repair of UV radiation-induced DNA damage during spore germination. Can repair thymine dimer 5-thyminyl-5,6-dihydrothymine (known as spore photoproduct (SP)) by in situ monomerization of SP to two thymines. The polypeptide is Spore photoproduct lyase (splG) (Geobacillus sp. (strain Y412MC61)).